Reading from the N-terminus, the 233-residue chain is Ion-translocating oxidoreductase complex subunit E (233 aa).

The next 6 membrane-spanning stretches (helical) occupy residues 18-38, 39-59, 69-89, 92-112, 128-148, and 182-202; these read ALVQ…ATNA, LGLG…VSAL, IPIY…LINA, FGLY…CIVI, ALDG…LGAL, and PFLL…LLAG.

Belongs to the NqrDE/RnfAE family. In terms of assembly, the complex is composed of six subunits: RnfA, RnfB, RnfC, RnfD, RnfE and RnfG.

It localises to the cell inner membrane. Its function is as follows. Part of a membrane-bound complex that couples electron transfer with translocation of ions across the membrane. The sequence is that of Ion-translocating oxidoreductase complex subunit E from Yersinia pseudotuberculosis serotype O:3 (strain YPIII).